Here is a 471-residue protein sequence, read N- to C-terminus: Ammonium transporter Rh type B (471 aa).

At 1–13 (MAGSPSRAAGRRL) the chain is on the cytoplasmic side. The chain crosses the membrane as a helical span at residues 14-33 (QLPLLSFLQGATAVLFAVFV). Residues 34–60 (RYNHKTDAALWHRGNHSNADNEFYFRY) lie on the Extracellular side of the membrane. N-linked (GlcNAc...) asparagine glycosylation is present at asparagine 48. Residues 61-81 (PSFQDVHAMVFVGFGFLMVFL) form a helical membrane-spanning segment. At 82–85 (QRYG) the chain is on the cytoplasmic side. The chain crosses the membrane as a helical span at residues 86–106 (FSSVGFTFLLAAFALQWSTLV). The Extracellular portion of the chain corresponds to 107–123 (QGFLHSFHGGHIHVGVE). Residues 124 to 144 (SMINADFCAGAVLISFGAVLG) traverse the membrane as a helical segment. Residues 145–148 (KTGP) are Cytoplasmic-facing. Residues 149-169 (AQLLLMALLEVVLFGINEFVL) form a helical membrane-spanning segment. The Extracellular segment spans residues 170-177 (LHLLGVRD). The helical transmembrane segment at 178–200 (AGGSMTIHTFGAYFGLVLSQVLY) threads the bilayer. At 201-217 (RPQLEKSKHRQGLYHSD) the chain is on the cytoplasmic side. A helical transmembrane segment spans residues 218–238 (LFAMIGTIFLWIFWPSFNAAL). Topologically, residues 239 to 249 (TSLGAGQHRTA) are extracellular. A helical membrane pass occupies residues 250–270 (LNTYYSLAASTLGTFALSALV). At 271 to 280 (GEDGRLDMVH) the chain is on the cytoplasmic side. A helical membrane pass occupies residues 281-301 (IQNAALAGRVVVGTSSEMMLT). Position 302 (proline 302) is a topological domain, extracellular. The helical transmembrane segment at 303–323 (FGALAAGFLAGTVSTLGYKFF) threads the bilayer. Topologically, residues 324–344 (TPILESKFKVQDTCGVHNLHG) are cytoplasmic. The helical transmembrane segment at 345–365 (MPGVLGVLLGVLVAGLATHEA) threads the bilayer. At 366 to 391 (YGDGLESVFPLIAEGQRSATSQAMYQ) the chain is on the extracellular side. A helical transmembrane segment spans residues 392 to 412 (LFGLFVTLMFASVGGGLGGLL). At 413–471 (LKLPFLDSPPDSQCYEDQVHWQAPGATLSPLPTPAFQVPGEHEDKAQRPLRVEEADTQA) the chain is on the cytoplasmic side. Positions 414 to 422 (KLPFLDSPP) are interaction with ANK3. Positions 427–430 (YEDQ) match the Basolateral sorting signal motif. The tract at residues 437 to 471 (GATLSPLPTPAFQVPGEHEDKAQRPLRVEEADTQA) is disordered. Basic and acidic residues predominate over residues 452 to 471 (GEHEDKAQRPLRVEEADTQA).

Belongs to the ammonium transporter (TC 2.A.49) family. Rh subfamily. As to quaternary structure, interacts (via C-terminus) with ANK2 and ANK3; required for targeting to the basolateral membrane. In terms of processing, N-glycosylated.

It is found in the cell membrane. The protein localises to the basolateral cell membrane. The catalysed reaction is NH4(+)(in) = NH4(+)(out). It catalyses the reaction methylamine(out) = methylamine(in). The enzyme catalyses CO2(out) = CO2(in). Functionally, ammonium transporter involved in the maintenance of acid-base homeostasis. Transports ammonium and its related derivative methylammonium across the basolateral plasma membrane of epithelial cells likely contributing to renal transepithelial ammonia transport and ammonia metabolism. May transport either NH4(+) or NH3 ammonia species predominantly mediating an electrogenic NH4(+) transport. May act as a CO2 channel providing for renal acid secretion. In Pongo pygmaeus (Bornean orangutan), this protein is Ammonium transporter Rh type B (RHBG).